The following is a 209-amino-acid chain: Large ribosomal subunit protein bL25 (209 aa).

This sequence belongs to the bacterial ribosomal protein bL25 family. CTC subfamily. In terms of assembly, part of the 50S ribosomal subunit; part of the 5S rRNA/L5/L18/L25 subcomplex. Contacts the 5S rRNA. Binds to the 5S rRNA independently of L5 and L18.

This is one of the proteins that binds to the 5S RNA in the ribosome where it forms part of the central protuberance. This chain is Large ribosomal subunit protein bL25, found in Xanthomonas campestris pv. campestris (strain B100).